Here is a 541-residue protein sequence, read N- to C-terminus: Putative ammonium transporter sll0537 (541 aa).

Transmembrane regions (helical) follow at residues 6 to 26, 44 to 64, 86 to 106, 117 to 137, 161 to 181, 203 to 223, 235 to 255, 260 to 280, 283 to 303, 316 to 336, and 356 to 376; these read TLWL…FMCL, FADF…IMFG, LAVF…IISG, YLLV…DWAW, FAGS…TILV, MPFS…FNGG, IMVN…LISL, MIQV…ITAS, VVMT…AYLV, VDAV…VGLF, and LLGI…FLTL.

It belongs to the ammonia transporter channel (TC 1.A.11.2) family.

The protein resides in the cell membrane. The sequence is that of Putative ammonium transporter sll0537 from Synechocystis sp. (strain ATCC 27184 / PCC 6803 / Kazusa).